We begin with the raw amino-acid sequence, 142 residues long: Putative pre-16S rRNA nuclease (142 aa).

The protein belongs to the YqgF nuclease family.

The protein resides in the cytoplasm. In terms of biological role, could be a nuclease involved in processing of the 5'-end of pre-16S rRNA. This Chloroflexus aggregans (strain MD-66 / DSM 9485) protein is Putative pre-16S rRNA nuclease.